The chain runs to 515 residues: Bifunctional purine biosynthesis protein PurH (515 aa).

Residues 1-145 enclose the MGS-like domain; sequence MTKRVLISVS…KNHASVTVVV (145 aa).

This sequence belongs to the PurH family.

It catalyses the reaction (6R)-10-formyltetrahydrofolate + 5-amino-1-(5-phospho-beta-D-ribosyl)imidazole-4-carboxamide = 5-formamido-1-(5-phospho-D-ribosyl)imidazole-4-carboxamide + (6S)-5,6,7,8-tetrahydrofolate. The catalysed reaction is IMP + H2O = 5-formamido-1-(5-phospho-D-ribosyl)imidazole-4-carboxamide. It participates in purine metabolism; IMP biosynthesis via de novo pathway; 5-formamido-1-(5-phospho-D-ribosyl)imidazole-4-carboxamide from 5-amino-1-(5-phospho-D-ribosyl)imidazole-4-carboxamide (10-formyl THF route): step 1/1. It functions in the pathway purine metabolism; IMP biosynthesis via de novo pathway; IMP from 5-formamido-1-(5-phospho-D-ribosyl)imidazole-4-carboxamide: step 1/1. The chain is Bifunctional purine biosynthesis protein PurH from Streptococcus pneumoniae serotype 2 (strain D39 / NCTC 7466).